The chain runs to 599 residues: MSEAAGNLNSLRLANVALREELNALRGENVQLGLQLGRALAEVNSLRGNVSSYIRWPMPIVPVLAEENFEFLLNETDPTPEEEEEEEEEVPFLCWPPPRTDPEYVSDDLLINVVQDYTNPDGSSDPPLSPSPSQPELHSPMLKEPTFEFLLPPLERPDIEPFSGDPVYLAEFLMQLETFIADHEDHFPGGAERVAFLISFFTGEARDWAISVTQEGSSLHANFPRFLDEIRKEFCGPIPSRVAKKAIRKLKQGNCTLGSYADAFQFLAQFLSWDDCRLQNQFLKGLSEIFRKELLWSTEVADLDELILECVKIERKVRVPKTASLTGVQNSCCPFALIPNEDENEGVEFYSENEGEGEEAGGYRLYLKDQRQHMTAFPQEMREEEEEMRKEEDEMEDEEDEDEDEDYEFEEEDEDDDDEEEEEEEEEEEDKEEEMKNEDSDENKYEEEDEVIVRVLEPEQEQEREEIEHEHVYVHEHIHAHVHTLAAHHHGLHGELMVMDEPVLVDTSTQTISSAIGYHAENYLGVSPSVMHSSRQRSQNRVPLLEGLPGTNSSFYSPPPLMRHAGRLGQRQMRRCPSVLFCLTPRQGGHRATQGRIRV.

Disordered regions lie at residues 77–97, 116–139, and 377–450; these read DPTP…CWPP, DYTN…ELHS, and FPQE…EEDE. Positions 78 to 90 are enriched in acidic residues; sequence PTPEEEEEEEEEV. 2 stretches are compositionally biased toward acidic residues: residues 393-432 and 439-450; these read DEME…EDKE and DSDENKYEEEDE.

The sequence is that of Retrotransposon Gag-like protein 5 from Mus musculus (Mouse).